We begin with the raw amino-acid sequence, 379 residues long: Chaperone protein DnaJ (379 aa).

Positions 5–69 (EFYDRLGVSK…QKRAAYDQYG (65 aa)) constitute a J domain. The CR-type zinc-finger motif lies at 135–217 (GAEKEVSYNR…CHGTGHEKKT (83 aa)). 8 residues coordinate Zn(2+): Cys148, Cys151, Cys165, Cys168, Cys191, Cys194, Cys205, and Cys208. 4 CXXCXGXG motif repeats span residues 148-155 (CHTCSGSG), 165-172 (CQKCHGSG), 191-198 (CDVCQGSG), and 205-212 (CPTCHGTG).

It belongs to the DnaJ family. As to quaternary structure, homodimer. The cofactor is Zn(2+).

It localises to the cytoplasm. Participates actively in the response to hyperosmotic and heat shock by preventing the aggregation of stress-denatured proteins and by disaggregating proteins, also in an autonomous, DnaK-independent fashion. Unfolded proteins bind initially to DnaJ; upon interaction with the DnaJ-bound protein, DnaK hydrolyzes its bound ATP, resulting in the formation of a stable complex. GrpE releases ADP from DnaK; ATP binding to DnaK triggers the release of the substrate protein, thus completing the reaction cycle. Several rounds of ATP-dependent interactions between DnaJ, DnaK and GrpE are required for fully efficient folding. Also involved, together with DnaK and GrpE, in the DNA replication of plasmids through activation of initiation proteins. This chain is Chaperone protein DnaJ, found in Streptococcus agalactiae serotype V (strain ATCC BAA-611 / 2603 V/R).